A 508-amino-acid polypeptide reads, in one-letter code: UBX domain-containing protein 4 (508 aa).

The segment at 1-200 (MLWFQGAIPA…PTEDLTVRVE (200 aa)) is interaction with UBQLN1. The Cytoplasmic portion of the chain corresponds to 1–413 (MLWFQGAIPA…VHSSSGDFWT (413 aa)). The disordered stretch occupies residues 117–199 (GEASLANGSQ…RPTEDLTVRV (83 aa)). Over residues 122 to 190 (ANGSQSEGSV…QEPSGCSNQR (69 aa)) the composition is skewed to polar residues. One can recognise a UBX domain in the interval 315–393 (ERSTVARIQF…ELAPSASVVL (79 aa)). Residues 414-434 (LLGTVLYPFLAIWRLISNFLF) lie within the membrane without spanning it. Over 435–508 (SNPPPAQTSV…TWNGNSTQQM (74 aa)) the chain is Cytoplasmic. Residues 450–459 (ETSNLASSSN) are compositionally biased toward polar residues. Positions 450–508 (ETSNLASSSNSEKREPVRKRVLEKRGEDFKKEGKIYRLRTQDDGEDENNTWNGNSTQQM) are disordered. Residues 460 to 491 (SEKREPVRKRVLEKRGEDFKKEGKIYRLRTQD) show a composition bias toward basic and acidic residues. T489 carries the post-translational modification Phosphothreonine. The span at 498-508 (NTWNGNSTQQM) shows a compositional bias: polar residues.

In terms of assembly, directly interacts with VCP. Interacts with UBQLN1. Forms a complex with VCP and UBQLN1.

It is found in the endoplasmic reticulum membrane. It localises to the nucleus envelope. In terms of biological role, involved in endoplasmic reticulum-associated protein degradation (ERAD). Acts as a platform to recruit both UBQLN1 and VCP to the ER during ERAD. This chain is UBX domain-containing protein 4 (UBXN4), found in Bos taurus (Bovine).